A 151-amino-acid polypeptide reads, in one-letter code: Transcriptional repressor NrdR (151 aa).

A zinc finger spans residues 3–34 (CPFCSSDNTRVIDSRPADDNSSIRRRRLCDDC). Residues 49–139 (LIVIKKDNNR…VYREFKDVNT (91 aa)) enclose the ATP-cone domain.

It belongs to the NrdR family. The cofactor is Zn(2+).

Functionally, negatively regulates transcription of bacterial ribonucleotide reductase nrd genes and operons by binding to NrdR-boxes. This chain is Transcriptional repressor NrdR, found in Agathobacter rectalis (strain ATCC 33656 / DSM 3377 / JCM 17463 / KCTC 5835 / VPI 0990) (Eubacterium rectale).